The sequence spans 244 residues: uncharacterized protein (244 aa).

An FCP1 homology domain is found at 19 to 196 (ATDNRKLVIL…ACVIRYLKHL (178 aa)).

This is an uncharacterized protein from Schizosaccharomyces pombe (strain 972 / ATCC 24843) (Fission yeast).